We begin with the raw amino-acid sequence, 133 residues long: uncharacterized protein (133 aa).

Residues 82 to 133 form a disordered region; the sequence is KIKSYSPSRSQKALNNPSKIRTKQTNNDTTIQQSNNTTSTNTKPSSNTNTQQ. The segment covering 86–100 has biased composition (polar residues); the sequence is YSPSRSQKALNNPSK. A compositionally biased stretch (low complexity) spans 105–133; the sequence is QTNNDTTIQQSNNTTSTNTKPSSNTNTQQ.

This is an uncharacterized protein from Acidianus convivator (ABV).